A 118-amino-acid polypeptide reads, in one-letter code: Large ribosomal subunit protein uL23c (118 aa).

The protein belongs to the universal ribosomal protein uL23 family. In terms of assembly, part of the 50S ribosomal subunit.

The protein localises to the plastid. It is found in the chloroplast. In terms of biological role, binds to 23S rRNA. This chain is Large ribosomal subunit protein uL23c (rpl23), found in Stigeoclonium helveticum (Green alga).